Reading from the N-terminus, the 418-residue chain is Secreted aspartic protease 6 (418 aa).

Residues methionine 1–alanine 18 form the signal peptide. Residues alanine 19 to arginine 76 constitute a propeptide, activation peptide. A Peptidase A1 domain is found at tyrosine 90–alanine 404. The active site involves aspartate 108. Aspartate 108–glycine 110 lines the pepstatin A pocket. Cysteine 123 and cysteine 135 are joined by a disulfide. Residue asparagine 138 is glycosylated (N-linked (GlcNAc...) asparagine). Position 268 (aspartate 268) interacts with Zn(2+). Aspartate 294 is a catalytic residue. Pepstatin A is bound at residue aspartate 294–threonine 298. Cysteine 332 and cysteine 370 are disulfide-bonded.

This sequence belongs to the peptidase A1 family.

It is found in the secreted. The catalysed reaction is Preferential cleavage at the carboxyl of hydrophobic amino acids, but fails to cleave 15-Leu-|-Tyr-16, 16-Tyr-|-Leu-17 and 24-Phe-|-Phe-25 of insulin B chain. Activates trypsinogen, and degrades keratin.. Inhibited by pepstatin A analogs. Secreted aspartic peptidases (SAPs) are a group of ten acidic hydrolases considered as key virulence factors. These enzymes supply the fungus with nutrient amino acids as well as are able to degrade the selected host's proteins involved in the immune defense. Moreover, acts toward human hemoglobin though limited proteolysis to generate a variety of antimicrobial hemocidins, enabling to compete with the other microorganisms of the same physiological niche using the microbicidal peptides generated from the host protein. The sequence is that of Secreted aspartic protease 6 from Candida albicans (Yeast).